The following is a 901-amino-acid chain: Valine--tRNA ligase (901 aa).

A disordered region spans residues 1–37 (MLPGCYTHRLNMSDTQDPPQDESTTDESADALDGEYD). Residues 19–35 (PQDESTTDESADALDGE) are compositionally biased toward acidic residues. The 'HIGH' region signature appears at 72–82 (PTVSGNLHMGH). The 'KMSKS' region signature appears at 572–576 (AMSKS). Lysine 575 lines the ATP pocket.

It belongs to the class-I aminoacyl-tRNA synthetase family. ValS type 2 subfamily.

It localises to the cytoplasm. It catalyses the reaction tRNA(Val) + L-valine + ATP = L-valyl-tRNA(Val) + AMP + diphosphate. Catalyzes the attachment of valine to tRNA(Val). As ValRS can inadvertently accommodate and process structurally similar amino acids such as threonine, to avoid such errors, it has a 'posttransfer' editing activity that hydrolyzes mischarged Thr-tRNA(Val) in a tRNA-dependent manner. The protein is Valine--tRNA ligase of Haloarcula marismortui (strain ATCC 43049 / DSM 3752 / JCM 8966 / VKM B-1809) (Halobacterium marismortui).